A 76-amino-acid polypeptide reads, in one-letter code: Protein UvsW.1 (76 aa).

As to quaternary structure, probably interacts with UvsW.

Inhibits the single-stranded annealing activity of UvsW, has no effect on UvsW helicase activity. The polypeptide is Protein UvsW.1 (Escherichia coli (Bacteriophage T4)).